Here is a 109-residue protein sequence, read N- to C-terminus: Putative double-stranded DNA mimic protein CKO_01325 (109 aa).

It belongs to the putative dsDNA mimic protein family.

Functionally, may act as a double-stranded DNA (dsDNA) mimic. Probably regulates the activity of a dsDNA-binding protein. This Citrobacter koseri (strain ATCC BAA-895 / CDC 4225-83 / SGSC4696) protein is Putative double-stranded DNA mimic protein CKO_01325.